Here is a 25-residue protein sequence, read N- to C-terminus: Large ribosomal subunit protein uL30 (25 aa).

It belongs to the universal ribosomal protein uL30 family. Part of the 50S ribosomal subunit.

In Pseudomonas putida (Arthrobacter siderocapsulatus), this protein is Large ribosomal subunit protein uL30 (rpmD).